The sequence spans 239 residues: Pyridoxine 5'-phosphate synthase (239 aa).

Asn-7 is a 3-amino-2-oxopropyl phosphate binding site. 9–10 (DH) is a 1-deoxy-D-xylulose 5-phosphate binding site. Arg-18 contributes to the 3-amino-2-oxopropyl phosphate binding site. His-43 functions as the Proton acceptor in the catalytic mechanism. 1-deoxy-D-xylulose 5-phosphate contacts are provided by Arg-45 and His-50. Glu-70 functions as the Proton acceptor in the catalytic mechanism. Residue Thr-100 participates in 1-deoxy-D-xylulose 5-phosphate binding. His-191 acts as the Proton donor in catalysis. Residues Gly-192 and 213 to 214 (GH) contribute to the 3-amino-2-oxopropyl phosphate site.

Belongs to the PNP synthase family. In terms of assembly, homooctamer; tetramer of dimers.

It localises to the cytoplasm. It catalyses the reaction 3-amino-2-oxopropyl phosphate + 1-deoxy-D-xylulose 5-phosphate = pyridoxine 5'-phosphate + phosphate + 2 H2O + H(+). It participates in cofactor biosynthesis; pyridoxine 5'-phosphate biosynthesis; pyridoxine 5'-phosphate from D-erythrose 4-phosphate: step 5/5. In terms of biological role, catalyzes the complicated ring closure reaction between the two acyclic compounds 1-deoxy-D-xylulose-5-phosphate (DXP) and 3-amino-2-oxopropyl phosphate (1-amino-acetone-3-phosphate or AAP) to form pyridoxine 5'-phosphate (PNP) and inorganic phosphate. The sequence is that of Pyridoxine 5'-phosphate synthase from Pelobacter propionicus (strain DSM 2379 / NBRC 103807 / OttBd1).